We begin with the raw amino-acid sequence, 55 residues long: uncharacterized protein (55 aa).

The interval 1–22 is disordered; that stretch reads MPALKSHVRPNSAAPARRQPWP.

This is an uncharacterized protein from Rhodobacter capsulatus (Rhodopseudomonas capsulata).